The primary structure comprises 196 residues: UDP-N-acetylglucosamine transferase subunit ALG13 (196 aa).

Belongs to the glycosyltransferase 28 family. Heterodimer with ALG14 to form a functional enzyme.

It localises to the endoplasmic reticulum. The catalysed reaction is an N-acetyl-alpha-D-glucosaminyl-diphospho-di-trans,poly-cis-dolichol + UDP-N-acetyl-alpha-D-glucosamine = an N,N'-diacetylchitobiosyl-diphospho-di-trans,poly-cis-dolichol + UDP + H(+). Its function is as follows. Involved in protein N-glycosylation. Essential for the second step of the dolichol-linked oligosaccharide pathway. This Yarrowia lipolytica (strain CLIB 122 / E 150) (Yeast) protein is UDP-N-acetylglucosamine transferase subunit ALG13 (ALG13).